Here is a 148-residue protein sequence, read N- to C-terminus: uncharacterized protein (148 aa).

Residues 1 to 23 (MKALVAVSAVAVVALLGVSSAQA) form the signal peptide. The segment at 22-45 (QADPEADPGAGEANYGGPPSSPRL) is disordered.

The protein to M.leprae ML2452.

This is an uncharacterized protein from Mycobacterium bovis (strain ATCC BAA-935 / AF2122/97).